A 226-amino-acid polypeptide reads, in one-letter code: Probable proteasome subunit beta type-7 (226 aa).

Belongs to the peptidase T1B family. As to quaternary structure, the 26S proteasome consists of a 20S proteasome core and two 19S regulatory subunits. The 20S proteasome core is composed of 28 subunits that are arranged in four stacked rings, resulting in a barrel-shaped structure. The two end rings are each formed by seven alpha subunits, and the two central rings are each formed by seven beta subunits. The catalytic chamber with the active sites is on the inside of the barrel.

The protein resides in the cytoplasm. It is found in the nucleus. In terms of biological role, non-catalytic component of the proteasome which degrades poly-ubiquitinated proteins in the cytoplasm and in the nucleus. It is essential for the regulated turnover of proteins and for the removal of misfolded proteins. The proteasome is a multicatalytic proteinase complex that is characterized by its ability to cleave peptides with Arg, Phe, Tyr, Leu, and Glu adjacent to the leaving group at neutral or slightly basic pH. It has an ATP-dependent proteolytic activity. The polypeptide is Probable proteasome subunit beta type-7 (PRE4) (Encephalitozoon cuniculi (strain GB-M1) (Microsporidian parasite)).